Consider the following 234-residue polypeptide: Phosphoribosylaminoimidazole-succinocarboxamide synthase (234 aa).

Belongs to the SAICAR synthetase family.

The enzyme catalyses 5-amino-1-(5-phospho-D-ribosyl)imidazole-4-carboxylate + L-aspartate + ATP = (2S)-2-[5-amino-1-(5-phospho-beta-D-ribosyl)imidazole-4-carboxamido]succinate + ADP + phosphate + 2 H(+). It participates in purine metabolism; IMP biosynthesis via de novo pathway; 5-amino-1-(5-phospho-D-ribosyl)imidazole-4-carboxamide from 5-amino-1-(5-phospho-D-ribosyl)imidazole-4-carboxylate: step 1/2. The protein is Phosphoribosylaminoimidazole-succinocarboxamide synthase of Pyrobaculum aerophilum (strain ATCC 51768 / DSM 7523 / JCM 9630 / CIP 104966 / NBRC 100827 / IM2).